A 313-amino-acid chain; its full sequence is Cytosolic Fe-S cluster assembly factor NUBP1 homolog (313 aa).

The interval Met-1–Gly-25 is disordered. Cys-12, Cys-26, Cys-29, and Cys-35 together coordinate [4Fe-4S] cluster. Gly-66–Ser-73 contributes to the ATP binding site. Cys-240 and Cys-243 together coordinate [4Fe-4S] cluster.

This sequence belongs to the Mrp/NBP35 ATP-binding proteins family. NUBP1/NBP35 subfamily. In terms of assembly, heterotetramer of 2 NUBP1 and 2 NUBP2 chains. The cofactor is [4Fe-4S] cluster. As to expression, expressed in head amphid and labial ciliated sensory neurons and tail phasmid ciliated chemosensory neurons.

The protein localises to the cytoplasm. Its subcellular location is the cell projection. Functionally, component of the cytosolic iron-sulfur (Fe/S) protein assembly (CIA) machinery. Required for maturation of extramitochondrial Fe-S proteins. The NUBP1-NUBP2 heterotetramer forms a Fe-S scaffold complex, mediating the de novo assembly of an Fe-S cluster and its transfer to target apoproteins. Regulates cilium formation and structure. The chain is Cytosolic Fe-S cluster assembly factor NUBP1 homolog from Caenorhabditis elegans.